The chain runs to 478 residues: Noelin-3 (478 aa).

The signal sequence occupies residues 1–23 (MSPPLLKLGAVLSTMAMISNWMS). N-linked (GlcNAc...) asparagine glycans are attached at residues N33, N95, N179, N299, and N465. Residues 77 to 217 (CSRDAKSRQL…TRLRDCMKKL (141 aa)) are a coiled coil. One can recognise an Olfactomedin-like domain in the interval 218–470 (TCGKLMKITG…QVLFNVTLFH (253 aa)). C219 and C401 form a disulfide bridge.

As to quaternary structure, peripherally associated with AMPAR complex. AMPAR complex consists of an inner core made of 4 pore-forming GluA/GRIA proteins (GRIA1, GRIA2, GRIA3 and GRIA4) and 4 major auxiliary subunits arranged in a twofold symmetry. One of the two pairs of distinct binding sites is occupied either by CNIH2, CNIH3 or CACNG2, CACNG3. The other harbors CACNG2, CACNG3, CACNG4, CACNG8 or GSG1L. This inner core of AMPAR complex is complemented by outer core constituents binding directly to the GluA/GRIA proteins at sites distinct from the interaction sites of the inner core constituents. Outer core constituents include at least PRRT1, PRRT2, CKAMP44/SHISA9, FRRS1L and NRN1. The proteins of the inner and outer core serve as a platform for other, more peripherally associated AMPAR constituents, including OLFM3. Alone or in combination, these auxiliary subunits control the gating and pharmacology of the AMPAR complex and profoundly impact their biogenesis and protein processing. Homodimer. Interacts with MYOC. Interacts with OLFM2. In the eye, expressed in trabecular meshwork and neural retina; in non-ocular tissues, expressed in brain and lung.

It is found in the secreted. It localises to the synapse. This is Noelin-3 (OLFM3) from Homo sapiens (Human).